A 136-amino-acid polypeptide reads, in one-letter code: uncharacterized protein (136 aa).

Positions 1–33 (MRDHLPPGLPPDPFADDPCDPSAALEAVEPGQP) are disordered.

This sequence to M.leprae ML0386.

This is an uncharacterized protein from Mycobacterium tuberculosis (strain CDC 1551 / Oshkosh).